Reading from the N-terminus, the 301-residue chain is ATP synthase gamma chain (301 aa).

Belongs to the ATPase gamma chain family. As to quaternary structure, F-type ATPases have 2 components, CF(1) - the catalytic core - and CF(0) - the membrane proton channel. CF(1) has five subunits: alpha(3), beta(3), gamma(1), delta(1), epsilon(1). CF(0) has three main subunits: a, b and c.

It localises to the cell inner membrane. Functionally, produces ATP from ADP in the presence of a proton gradient across the membrane. The gamma chain is believed to be important in regulating ATPase activity and the flow of protons through the CF(0) complex. This chain is ATP synthase gamma chain, found in Helicobacter pylori (strain P12).